The chain runs to 305 residues: Coenzyme PQQ synthesis protein B (305 aa).

It belongs to the PqqB family.

It participates in cofactor biosynthesis; pyrroloquinoline quinone biosynthesis. Functionally, may be involved in the transport of PQQ or its precursor to the periplasm. This chain is Coenzyme PQQ synthesis protein B, found in Methylobacillus flagellatus (strain ATCC 51484 / DSM 6875 / VKM B-1610 / KT).